A 90-amino-acid chain; its full sequence is MNDSVKTSLKRTLVGKVVSNKMDKTVTVLVEHRVKHPIYGKYVVRSKKYHAHDEANTYNEGDLVEIQETRPVSKTKAWTVSRLVEAARVI.

The protein belongs to the universal ribosomal protein uS17 family. As to quaternary structure, part of the 30S ribosomal subunit.

One of the primary rRNA binding proteins, it binds specifically to the 5'-end of 16S ribosomal RNA. The chain is Small ribosomal subunit protein uS17 from Burkholderia thailandensis (strain ATCC 700388 / DSM 13276 / CCUG 48851 / CIP 106301 / E264).